The chain runs to 501 residues: Envelope glycoprotein C homolog (501 aa).

An N-terminal signal peptide occupies residues 1–27 (MLTPRVLRALGWTGLFFLLLSPSNVLG). The Virion surface portion of the chain corresponds to 28-465 (ASLSRDLETP…DATPAARGTP (438 aa)). Asparagine 46 carries an N-linked (GlcNAc...) asparagine; by host glycan. Positions 53-86 (PLTEVPHAPSTESVSTNSESTNEHTITETTGKNA) are disordered. A compositionally biased stretch (low complexity) spans 62-72 (STESVSTNSES). N-linked (GlcNAc...) asparagine; by host glycans are attached at residues asparagine 91, asparagine 100, asparagine 120, asparagine 212, asparagine 354, asparagine 400, and asparagine 429. The Ig-like domain maps to 258 to 356 (PASVDVLAPP…GDMISTTNAT (99 aa)). The chain crosses the membrane as a helical span at residues 466–492 (MVITVTAVLGLAVILGMGIIMTALCLY). Topologically, residues 493 to 501 (NSTRKNIRL) are cytoplasmic.

This sequence belongs to the herpesviridae glycoprotein C family.

The protein localises to the secreted. Its subcellular location is the host cell membrane. In terms of biological role, may play an immunoevasive role in the pathogenesis of Marek's disease. It is a candidate for causing the early-stage immunosuppression that occurs after MDHV infection. The sequence is that of Envelope glycoprotein C homolog (gC) from Gallus gallus (Chicken).